Reading from the N-terminus, the 89-residue chain is Small ribosomal subunit protein uS15 (89 aa).

This sequence belongs to the universal ribosomal protein uS15 family. Part of the 30S ribosomal subunit. Forms a bridge to the 50S subunit in the 70S ribosome, contacting the 23S rRNA.

Its function is as follows. One of the primary rRNA binding proteins, it binds directly to 16S rRNA where it helps nucleate assembly of the platform of the 30S subunit by binding and bridging several RNA helices of the 16S rRNA. Forms an intersubunit bridge (bridge B4) with the 23S rRNA of the 50S subunit in the ribosome. The polypeptide is Small ribosomal subunit protein uS15 (Leuconostoc citreum (strain KM20)).